Reading from the N-terminus, the 64-residue chain is Large ribosomal subunit protein bL35 (64 aa).

A compositionally biased stretch (basic residues) spans 1-22 (MPKMKSHTGMGKRVRVTGKGKI). The disordered stretch occupies residues 1–39 (MPKMKSHTGMGKRVRVTGKGKIVKQQAGLRHNLEKKPST).

This sequence belongs to the bacterial ribosomal protein bL35 family.

This Salinispora arenicola (strain CNS-205) protein is Large ribosomal subunit protein bL35.